The primary structure comprises 574 residues: 5'-nucleotidase (574 aa).

Residues 1–26 (MNPGAARTPALRILALGALLWPAARP) form the signal peptide. The Zn(2+) site is built by Asp36 and His38. The cysteines at positions 51 and 57 are disulfide-linked. A glycan (N-linked (GlcNAc...) asparagine) is linked at Asn53. Residues Asp85, Asn117, His220, and His243 each contribute to the Zn(2+) site. N-linked (GlcNAc...) asparagine glycans are attached at residues Asn311 and Asn333. 2 disulfides stabilise this stretch: Cys353-Cys358 and Cys365-Cys387. An AMP-binding site is contributed by Arg354. Arg354 contributes to the IMP binding site. 2 residues coordinate AMP: Asn390 and Arg395. The IMP site is built by Asn390 and Arg395. Asn403 carries an N-linked (GlcNAc...) asparagine glycan. Phe417 provides a ligand contact to AMP. IMP is bound at residue Phe417. Cys476 and Cys479 are oxidised to a cystine. The AMP site is built by Phe500 and Asp506. IMP is bound by residues Phe500 and Asp506. A lipid anchor (GPI-anchor amidated serine) is attached at Ser549. The propeptide at 550–574 (AGSHCCGSFSLIFLSVLAVIIILYQ) is removed in mature form.

Belongs to the 5'-nucleotidase family. In terms of assembly, homodimer. Requires Zn(2+) as cofactor.

It is found in the cell membrane. It catalyses the reaction a ribonucleoside 5'-phosphate + H2O = a ribonucleoside + phosphate. It carries out the reaction a 2'-deoxyribonucleoside 5'-phosphate + H2O = a 2'-deoxyribonucleoside + phosphate. The enzyme catalyses dTMP + H2O = thymidine + phosphate. The catalysed reaction is CMP + H2O = cytidine + phosphate. It catalyses the reaction IMP + H2O = inosine + phosphate. It carries out the reaction AMP + H2O = adenosine + phosphate. The enzyme catalyses GMP + H2O = guanosine + phosphate. The catalysed reaction is UMP + H2O = uridine + phosphate. It catalyses the reaction dAMP + H2O = 2'-deoxyadenosine + phosphate. It carries out the reaction dCMP + H2O = 2'-deoxycytidine + phosphate. Its function is as follows. Catalyzes the hydrolysis of nucleotide monophosphates, releasing inorganic phosphate and the corresponding nucleoside, with AMP being the preferred substrate. Shows a preference for ribonucleotide monophosphates over their equivalent deoxyribose forms. Other substrates include IMP, UMP, GMP, CMP, dAMP, dCMP, dTMP, NAD and NMN. This Bos taurus (Bovine) protein is 5'-nucleotidase (NT5E).